Reading from the N-terminus, the 425-residue chain is Xyloglucan O-acetyltransferase 2 (425 aa).

Residues 1–18 (MGSPFKDHHTLHPSLVRK) lie on the Cytoplasmic side of the membrane. A helical; Signal-anchor for type II membrane protein membrane pass occupies residues 19-38 (LIPWTFYAMVPLVLFRVYLY). Over 39–425 (PYPLHHTTTT…KWEYASRREQ (387 aa)) the chain is Lumenal. Cystine bridges form between C68–C118, C89–C154, C98–C398, and C313–C394. N-linked (GlcNAc...) asparagine glycosylation occurs at N85. The short motif at 141–143 (GDS) is the GDS motif element. S143 functions as the Nucleophile in the catalytic mechanism. 2 N-linked (GlcNAc...) asparagine glycosylation sites follow: N183 and N259. Catalysis depends on D393, which acts as the Proton donor. The DXXH motif motif lies at 393–396 (DCVH). Residue H396 is the Proton acceptor of the active site.

Belongs to the PC-esterase family. TBL subfamily.

It localises to the golgi apparatus membrane. Functionally, xyloglucan acetyltransferase that catalyzes the acetylation of fucosylated Gal residues on xyloglucan side chains. Predominantly catalyze 6-O-monoacetylation of Gal residues in the Fuc-Gal-Xyl trisaccharide side chains of xyloglucan oligomers. This is Xyloglucan O-acetyltransferase 2 from Populus trichocarpa (Western balsam poplar).